The primary structure comprises 425 residues: Adenylosuccinate synthetase (425 aa).

GTP-binding positions include 12-18 (GDEGKGK) and 40-42 (GHT). Asp13 serves as the catalytic Proton acceptor. Mg(2+) contacts are provided by Asp13 and Gly40. Residues 13-16 (DEGK), 38-41 (NAGH), Thr130, Arg144, Gln224, Thr239, and Arg301 each bind IMP. His41 (proton donor) is an active-site residue. Substrate is bound at residue 297–303 (TVSNRRR). GTP contacts are provided by residues Arg303, 329-331 (KLD), and 411-413 (STS).

The protein belongs to the adenylosuccinate synthetase family. As to quaternary structure, homodimer. Requires Mg(2+) as cofactor.

Its subcellular location is the cytoplasm. It carries out the reaction IMP + L-aspartate + GTP = N(6)-(1,2-dicarboxyethyl)-AMP + GDP + phosphate + 2 H(+). The protein operates within purine metabolism; AMP biosynthesis via de novo pathway; AMP from IMP: step 1/2. Functionally, plays an important role in the de novo pathway of purine nucleotide biosynthesis. Catalyzes the first committed step in the biosynthesis of AMP from IMP. The sequence is that of Adenylosuccinate synthetase from Wolbachia pipientis wMel.